The chain runs to 139 residues: MKLISASLRRFSLAVLTILLVVSSFAVFTPSASAETYQVKLGTDKGLLAFEPKKLTIKPGDTIEWVNNKVPPHNVVFDPAKNPSKNADLAKSLSHKKLLMSAGQKETTTFAADAPAGDYTFYCEPHRGAGMVGTITVQG.

A signal peptide spans Met-1–Ala-34. One can recognise a Plastocyanin-like domain in the interval Glu-35 to Gly-139. Positions 73, 123, 126, and 131 each coordinate Cu cation.

It belongs to the plastocyanin family. Cu(2+) serves as cofactor.

Its subcellular location is the cellular thylakoid membrane. In terms of biological role, participates in electron transfer between P700 and the cytochrome b6-f complex in photosystem I. The polypeptide is Plastocyanin (Nostoc punctiforme (strain ATCC 29133 / PCC 73102)).